The sequence spans 160 residues: Crossover junction endodeoxyribonuclease RuvC (160 aa).

Active-site residues include Asp-9, Glu-68, and Asp-141. The Mg(2+) site is built by Asp-9, Glu-68, and Asp-141.

It belongs to the RuvC family. In terms of assembly, homodimer which binds Holliday junction (HJ) DNA. The HJ becomes 2-fold symmetrical on binding to RuvC with unstacked arms; it has a different conformation from HJ DNA in complex with RuvA. In the full resolvosome a probable DNA-RuvA(4)-RuvB(12)-RuvC(2) complex forms which resolves the HJ. The cofactor is Mg(2+).

It localises to the cytoplasm. The catalysed reaction is Endonucleolytic cleavage at a junction such as a reciprocal single-stranded crossover between two homologous DNA duplexes (Holliday junction).. In terms of biological role, the RuvA-RuvB-RuvC complex processes Holliday junction (HJ) DNA during genetic recombination and DNA repair. Endonuclease that resolves HJ intermediates. Cleaves cruciform DNA by making single-stranded nicks across the HJ at symmetrical positions within the homologous arms, yielding a 5'-phosphate and a 3'-hydroxyl group; requires a central core of homology in the junction. The consensus cleavage sequence is 5'-(A/T)TT(C/G)-3'. Cleavage occurs on the 3'-side of the TT dinucleotide at the point of strand exchange. HJ branch migration catalyzed by RuvA-RuvB allows RuvC to scan DNA until it finds its consensus sequence, where it cleaves and resolves the cruciform DNA. This Campylobacter jejuni subsp. jejuni serotype O:23/36 (strain 81-176) protein is Crossover junction endodeoxyribonuclease RuvC.